The following is a 127-amino-acid chain: Large ribosomal subunit protein bL12 (127 aa).

The protein belongs to the bacterial ribosomal protein bL12 family. Homodimer. Part of the ribosomal stalk of the 50S ribosomal subunit. Forms a multimeric L10(L12)X complex, where L10 forms an elongated spine to which 2 to 4 L12 dimers bind in a sequential fashion. Binds GTP-bound translation factors.

In terms of biological role, forms part of the ribosomal stalk which helps the ribosome interact with GTP-bound translation factors. Is thus essential for accurate translation. This chain is Large ribosomal subunit protein bL12, found in Streptomyces griseus subsp. griseus (strain JCM 4626 / CBS 651.72 / NBRC 13350 / KCC S-0626 / ISP 5235).